Consider the following 434-residue polypeptide: Trigger factor (434 aa).

The region spanning 161–246 (EDRATIDFSG…LKKVEERELP (86 aa)) is the PPIase FKBP-type domain.

Belongs to the FKBP-type PPIase family. Tig subfamily.

The protein localises to the cytoplasm. The enzyme catalyses [protein]-peptidylproline (omega=180) = [protein]-peptidylproline (omega=0). Its function is as follows. Involved in protein export. Acts as a chaperone by maintaining the newly synthesized protein in an open conformation. Functions as a peptidyl-prolyl cis-trans isomerase. This Erwinia tasmaniensis (strain DSM 17950 / CFBP 7177 / CIP 109463 / NCPPB 4357 / Et1/99) protein is Trigger factor.